Reading from the N-terminus, the 281-residue chain is Proteasome subunit beta 2 (281 aa).

The propeptide at 1–53 is removed in mature form; by autocatalysis; sequence MEANTRSTGRLPAAFLTPGSSSFMDFLSEHQPEILPGNRQLPPTQGVIEAPHG. Thr54 functions as the Nucleophile in the catalytic mechanism.

This sequence belongs to the peptidase T1B family. As to quaternary structure, the 20S proteasome core is composed of 14 alpha and 14 beta subunits that assemble into four stacked heptameric rings, resulting in a barrel-shaped structure. The two inner rings, each composed of seven catalytic beta subunits, are sandwiched by two outer rings, each composed of seven alpha subunits. The catalytic chamber with the active sites is on the inside of the barrel. Has a gated structure, the ends of the cylinder being occluded by the N-termini of the alpha-subunits. Is capped by the proteasome-associated ATPase, ARC.

Its subcellular location is the cytoplasm. The enzyme catalyses Cleavage of peptide bonds with very broad specificity.. The protein operates within protein degradation; proteasomal Pup-dependent pathway. With respect to regulation, the formation of the proteasomal ATPase ARC-20S proteasome complex, likely via the docking of the C-termini of ARC into the intersubunit pockets in the alpha-rings, may trigger opening of the gate for substrate entry. Interconversion between the open-gate and close-gate conformations leads to a dynamic regulation of the 20S proteasome proteolysis activity. Its function is as follows. Component of the proteasome core, a large protease complex with broad specificity involved in protein degradation. The polypeptide is Proteasome subunit beta 2 (Streptomyces avermitilis (strain ATCC 31267 / DSM 46492 / JCM 5070 / NBRC 14893 / NCIMB 12804 / NRRL 8165 / MA-4680)).